We begin with the raw amino-acid sequence, 239 residues long: Vesicle-associated protein 1-3 (239 aa).

M1 is subject to N-acetylmethionine. T2 carries the N-acetylthreonine; in Vesicle-associated protein 1-3, N-terminally processed modification. Residues 2–215 lie on the Cytoplasmic side of the membrane; that stretch reads TTGDLVNIHP…RKETSKKQSG (214 aa). One can recognise an MSP domain in the interval 6-127; that stretch reads LVNIHPTELK…EDFKLRVVYI (122 aa). Residues S133 and S164 each carry the phosphoserine modification. Positions 179–214 form a coiled coil; that stretch reads SMISKLTEEKTSATQQSQKLRLELEMLRKETSKKQS. The chain crosses the membrane as a helical; Anchor for type IV membrane protein span at residues 216-236; sequence GHSLLLMLLVGLLGCVIGYLL.

The protein belongs to the VAMP-associated protein (VAP) (TC 9.B.17) family.

It localises to the endoplasmic reticulum membrane. In terms of biological role, may play a role in vesicle trafficking. The polypeptide is Vesicle-associated protein 1-3 (PVA13) (Arabidopsis thaliana (Mouse-ear cress)).